The chain runs to 117 residues: Nascent polypeptide-associated complex protein (117 aa).

The 69-residue stretch at 9 to 77 folds into the NAC-A/B domain; the sequence is PKQLKQMQRA…ARECDLEAEV (69 aa).

This sequence belongs to the NAC-alpha family. As to quaternary structure, homodimer. Interacts with the ribosome. Binds ribosomal RNA.

In terms of biological role, contacts the emerging nascent chain on the ribosome. The chain is Nascent polypeptide-associated complex protein from Methanothermobacter marburgensis (strain ATCC BAA-927 / DSM 2133 / JCM 14651 / NBRC 100331 / OCM 82 / Marburg) (Methanobacterium thermoautotrophicum).